The following is a 290-amino-acid chain: MRLSAFAPAKVNLFLHVGGPDGEGYHPISSLMVFADVGDRVNLQPADAPAFETSGPFGDQIPAGGDNLVVRAGQAFHRRLGGPVPPYRLILEKHLPIAAGLGGGSSDAGAALKLLRDALAPALSDDDLEALAASLGADGAACLRARALIAEGRGERLSPAPRLPELNAVLVNPGAPSPTGAVYRAYDAGVHPDGAAMPPMPDHLESAEEAAAWLAFATRNDLEAPAVRLEPHIGEVLDVLRGEPESLLVRMSGSGATCFALCASDIEAEGLAERLETMRPDWWVRRCRLS.

K10 is an active-site residue. 96–106 is a binding site for ATP; sequence PIAAGLGGGSS. D138 is an active-site residue.

The protein belongs to the GHMP kinase family. IspE subfamily.

It catalyses the reaction 4-CDP-2-C-methyl-D-erythritol + ATP = 4-CDP-2-C-methyl-D-erythritol 2-phosphate + ADP + H(+). It functions in the pathway isoprenoid biosynthesis; isopentenyl diphosphate biosynthesis via DXP pathway; isopentenyl diphosphate from 1-deoxy-D-xylulose 5-phosphate: step 3/6. In terms of biological role, catalyzes the phosphorylation of the position 2 hydroxy group of 4-diphosphocytidyl-2C-methyl-D-erythritol. In Caulobacter vibrioides (strain NA1000 / CB15N) (Caulobacter crescentus), this protein is 4-diphosphocytidyl-2-C-methyl-D-erythritol kinase.